Here is a 66-residue protein sequence, read N- to C-terminus: Large ribosomal subunit protein bL33c (66 aa).

Belongs to the bacterial ribosomal protein bL33 family.

The protein resides in the plastid. The protein localises to the chloroplast. The sequence is that of Large ribosomal subunit protein bL33c from Cicer arietinum (Chickpea).